A 381-amino-acid chain; its full sequence is DNA dC-&gt;dU-editing enzyme APOBEC-3G (381 aa).

Positions 1–62 are essential for cytoplasmic localization; the sequence is MKPQTRNTVV…ANIFQGQVSF (62 aa). 2 CMP/dCMP-type deaminase domains span residues 29–143 and 211–325; these read HRNT…SQTG and GQHQ…LRRL. T32 is modified (phosphothreonine; by PKA). Residues H67, C98, and C101 each contribute to the Zn(2+) site. Residues 206–333 are necessary for homooligomerization; it reads DPSVLGQHQS…RLDRAGTPIS (128 aa). Residues 210 to 212 are interaction with DNA; the sequence is LGQ. H254 provides a ligand contact to Zn(2+). E256 (proton donor) is an active-site residue. 2 residues coordinate Zn(2+): C285 and C288. The interval 310-317 is interaction with DNA; that stretch reads RIYDYQRG.

This sequence belongs to the cytidine and deoxycytidylate deaminase family. In terms of assembly, homodimer. Homooligomer. Can bind RNA to form ribonucleoprotein complexes of high-molecular-mass (HMM) or low-molecular-mass (LMM). HMM is inactive and heterogeneous in protein composition because of binding nonselectively to cellular RNAs, which in turn are associated with variety of cellular proteins. The LMM form which is enzymatically active has few or no RNAs associated. Its ability to form homooligomer is distinct from its ability to assemble into HMM. Interacts with APOBEC3B, APOBEC3F, MOV10, AGO2, EIF4E, EIF4ENIF1, DCP2 and DDX6 in an RNA-dependent manner. Interacts with AGO1, AGO3 and PKA/PRKACA. The cofactor is Zn(2+).

The protein resides in the cytoplasm. The protein localises to the nucleus. Its subcellular location is the P-body. The catalysed reaction is a 2'-deoxycytidine in single-stranded DNA + H2O + H(+) = a 2'-deoxyuridine in single-stranded DNA + NH4(+). DNA deaminase (cytidine deaminase) which acts as an inhibitor of retrovirus replication and retrotransposon mobility. After the penetration of retroviral nucleocapsids into target cells of infection and the initiation of reverse transcription, it can induce the conversion of cytosine to uracil in the minus-sense single-strand viral DNA, leading to G-to-A hypermutations in the subsequent plus-strand viral DNA. The resultant detrimental levels of mutations in the proviral genome, along with a deamination-independent mechanism that works prior to the proviral integration, together exert efficient antiretroviral effects in infected target cells. Selectively targets single-stranded DNA and does not deaminate double-stranded DNA or single- or double-stranded RNA. This Lagothrix lagotricha (Brown woolly monkey) protein is DNA dC-&gt;dU-editing enzyme APOBEC-3G (APOBEC3G).